The sequence spans 498 residues: NADH-quinone oxidoreductase subunit N 2 (498 aa).

Helical transmembrane passes span 19–39 (VATQLSIIFGWASVLLVIALF), 47–67 (IVGYLAMVGAMVAAAVGIPLW), 83–103 (YSLTLNWLFLAAAAITMVLSL), 114–134 (SEYYVLVLFATGGMMLLAQGA), 136–156 (LIILFLGLELLSIVLYVLTGF), 171–191 (LLIGAFAGGFVVFGIALLYGA), 215–235 (IYLLAGAALVVVGFGYKVAMA), 249–269 (PTPIAGLLSVGSKAAGFAALL), 282–302 (IWAPVLAVLAIATLAVGNIGA), 317–337 (IGHAGYILFGVIAAGAPGGIA), 345–365 (VLLYLIAYTFTNLGAFGVLIA), 389–409 (LAVAMAVCMLSLAGVPPTGGF), 420–440 (WLSGMGWITVIGVIVAAIAAF), and 468–488 (AGLALATLGVLILGFLPTPAI).

It belongs to the complex I subunit 2 family. In terms of assembly, NDH-1 is composed of 14 different subunits. Subunits NuoA, H, J, K, L, M, N constitute the membrane sector of the complex.

Its subcellular location is the cell membrane. It carries out the reaction a quinone + NADH + 5 H(+)(in) = a quinol + NAD(+) + 4 H(+)(out). Functionally, NDH-1 shuttles electrons from NADH, via FMN and iron-sulfur (Fe-S) centers, to quinones in the respiratory chain. The immediate electron acceptor for the enzyme in this species is believed to be ubiquinone. Couples the redox reaction to proton translocation (for every two electrons transferred, four hydrogen ions are translocated across the cytoplasmic membrane), and thus conserves the redox energy in a proton gradient. The polypeptide is NADH-quinone oxidoreductase subunit N 2 (Roseiflexus castenholzii (strain DSM 13941 / HLO8)).